The following is a 637-amino-acid chain: Probable polypeptide N-acetylgalactosaminyltransferase 8 (637 aa).

The Cytoplasmic segment spans residues M1–K6. A helical; Signal-anchor for type II membrane protein membrane pass occupies residues L7–S29. Over K30–Q637 the chain is Lumenal. N-linked (GlcNAc...) asparagine glycans are attached at residues N85, N107, and N160. Cystine bridges form between C171-C404, C395-C474, C509-C525, C556-C571, and C599-C617. The catalytic subdomain A stretch occupies residues L180 to R294. Residues D221 and R255 each coordinate substrate. The Mn(2+) site is built by D278, H280, and H409. Positions P351 to R412 are catalytic subdomain B. 2 residues coordinate substrate: R412 and Y417. The Ricin B-type lectin domain occupies G496–T634.

It belongs to the glycosyltransferase 2 family. GalNAc-T subfamily. It depends on Mn(2+) as a cofactor. Widely expressed. Expressed in heart, skeletal muscle, kidney, liver, small intestine and placenta. Weakly expressed in colon, thymus, spleen, lung and leukocyte.

It localises to the golgi apparatus membrane. It catalyses the reaction L-seryl-[protein] + UDP-N-acetyl-alpha-D-galactosamine = a 3-O-[N-acetyl-alpha-D-galactosaminyl]-L-seryl-[protein] + UDP + H(+). The enzyme catalyses L-threonyl-[protein] + UDP-N-acetyl-alpha-D-galactosamine = a 3-O-[N-acetyl-alpha-D-galactosaminyl]-L-threonyl-[protein] + UDP + H(+). The protein operates within protein modification; protein glycosylation. Its function is as follows. Probably catalyzes the initial reaction in O-linked oligosaccharide biosynthesis, the transfer of an N-acetyl-D-galactosamine residue to a serine or threonine residue on the protein receptor. The protein is Probable polypeptide N-acetylgalactosaminyltransferase 8 (GALNT8) of Homo sapiens (Human).